The sequence spans 117 residues: NADH-ubiquinone oxidoreductase chain 3 (117 aa).

The next 3 membrane-spanning stretches (helical) occupy residues methionine 1–leucine 21, phenylalanine 58–isoleucine 78, and threonine 86–leucine 106.

Belongs to the complex I subunit 3 family.

The protein localises to the mitochondrion membrane. The enzyme catalyses a ubiquinone + NADH + 5 H(+)(in) = a ubiquinol + NAD(+) + 4 H(+)(out). Core subunit of the mitochondrial membrane respiratory chain NADH dehydrogenase (Complex I) that is believed to belong to the minimal assembly required for catalysis. Complex I functions in the transfer of electrons from NADH to the respiratory chain. The immediate electron acceptor for the enzyme is believed to be ubiquinone. The protein is NADH-ubiquinone oxidoreductase chain 3 (ND3) of Apis mellifera ligustica (Common honeybee).